The following is a 286-amino-acid chain: 33 kDa chaperonin (286 aa).

Intrachain disulfides connect Cys-236–Cys-238 and Cys-264–Cys-267.

It belongs to the HSP33 family. Under oxidizing conditions two disulfide bonds are formed involving the reactive cysteines. Under reducing conditions zinc is bound to the reactive cysteines and the protein is inactive.

The protein resides in the cytoplasm. Its function is as follows. Redox regulated molecular chaperone. Protects both thermally unfolding and oxidatively damaged proteins from irreversible aggregation. Plays an important role in the bacterial defense system toward oxidative stress. This is 33 kDa chaperonin from Carboxydothermus hydrogenoformans (strain ATCC BAA-161 / DSM 6008 / Z-2901).